The sequence spans 302 residues: D-alanine--D-alanine ligase (302 aa).

The region spanning 99 to 298 is the ATP-grasp domain; that stretch reads KRLFVAEGIP…FEQLIQRIID (200 aa). Position 128–183 (128–183) interacts with ATP; the sequence is LAALGSPVVVKPADGGSTVGVTIAREAGHLPEAVRLALQYSPQVLIEQYIPGQEIT. Residues Asp-252, Glu-265, and Asn-267 each coordinate Mg(2+).

Belongs to the D-alanine--D-alanine ligase family. It depends on Mg(2+) as a cofactor. Mn(2+) is required as a cofactor.

The protein resides in the cytoplasm. The catalysed reaction is 2 D-alanine + ATP = D-alanyl-D-alanine + ADP + phosphate + H(+). It participates in cell wall biogenesis; peptidoglycan biosynthesis. Cell wall formation. This chain is D-alanine--D-alanine ligase, found in Gloeobacter violaceus (strain ATCC 29082 / PCC 7421).